The primary structure comprises 77 residues: Protein RALF-like 17 (77 aa).

Residues 1 to 29 (MAASREFIICCFLTLLLCNFFMRVESGAA) form the signal peptide. A disulfide bridge links Cys-37 with Cys-51.

The protein belongs to the plant rapid alkalinization factor (RALF) family.

Its subcellular location is the secreted. Cell signaling peptide that may regulate plant stress, growth, and development. Mediates a rapid alkalinization of extracellular space by mediating a transient increase in the cytoplasmic Ca(2+) concentration leading to a calcium-dependent signaling events through a cell surface receptor and a concomitant activation of some intracellular mitogen-activated protein kinases. The protein is Protein RALF-like 17 (RALFL17) of Arabidopsis thaliana (Mouse-ear cress).